The sequence spans 24 residues: Fibrinogen gamma chain (24 aa).

Heterohexamer; disulfide linked. Contains 2 sets of 3 non-identical chains (alpha, beta and gamma). The 2 heterotrimers are in head to head conformation with the N-termini in a small central domain. In terms of processing, conversion of fibrinogen to fibrin is triggered by thrombin, which cleaves fibrinopeptides A and B from alpha and beta chains, and thus exposes the N-terminal polymerization sites responsible for the formation of the soft clot. The soft clot is converted into the hard clot by factor XIIIA which catalyzes the epsilon-(gamma-glutamyl)lysine cross-linking between gamma chains (stronger) and between alpha chains (weaker) of different monomers.

The protein localises to the secreted. Functionally, together with fibrinogen alpha (FGA) and fibrinogen beta (FGB), polymerizes to form an insoluble fibrin matrix. Has a major function in hemostasis as one of the primary components of blood clots. In addition, functions during the early stages of wound repair to stabilize the lesion and guide cell migration during re-epithelialization. Was originally thought to be essential for platelet aggregation, based on in vitro studies using anticoagulated blood. However, subsequent studies have shown that it is not absolutely required for thrombus formation in vivo. Enhances expression of SELP in activated platelets via an ITGB3-dependent pathway. Maternal fibrinogen is essential for successful pregnancy. Fibrin deposition is also associated with infection, where it protects against IFNG-mediated hemorrhage. May also facilitate the antibacterial immune response via both innate and T-cell mediated pathways. The protein is Fibrinogen gamma chain (FGG) of Canis lupus familiaris (Dog).